The primary structure comprises 403 residues: Cysteine desulfurase IscS (403 aa).

Pyridoxal 5'-phosphate is bound by residues Ala-73–Thr-74, Asn-153, Gln-181, and Ser-201–His-203. Lys-204 bears the N6-(pyridoxal phosphate)lysine mark. Residue Thr-241 participates in pyridoxal 5'-phosphate binding. Cys-326 functions as the Cysteine persulfide intermediate in the catalytic mechanism. A [2Fe-2S] cluster-binding site is contributed by Cys-326.

It belongs to the class-V pyridoxal-phosphate-dependent aminotransferase family. NifS/IscS subfamily. In terms of assembly, homodimer. Forms a heterotetramer with IscU, interacts with other sulfur acceptors. Pyridoxal 5'-phosphate serves as cofactor.

It is found in the cytoplasm. It catalyses the reaction (sulfur carrier)-H + L-cysteine = (sulfur carrier)-SH + L-alanine. It participates in cofactor biosynthesis; iron-sulfur cluster biosynthesis. Its function is as follows. Master enzyme that delivers sulfur to a number of partners involved in Fe-S cluster assembly, tRNA modification or cofactor biosynthesis. Catalyzes the removal of elemental sulfur atoms from cysteine to produce alanine. Functions as a sulfur delivery protein for Fe-S cluster synthesis onto IscU, an Fe-S scaffold assembly protein, as well as other S acceptor proteins. This is Cysteine desulfurase IscS from Methylococcus capsulatus (strain ATCC 33009 / NCIMB 11132 / Bath).